A 549-amino-acid chain; its full sequence is Probable protein kinase UbiB (549 aa).

In terms of domain architecture, Protein kinase spans 123 to 501 (DFDDTPLASA…QQKAHKSNYL (379 aa)). Residues 129–137 (LASASISQV) and K152 each bind ATP. D287 (proton acceptor) is an active-site residue. The next 2 membrane-spanning stretches (helical) occupy residues 498–518 (SNYLLITSAILVICGTILLNQ) and 520–540 (ATLWPSYGSIGIGITLWVLGW).

The protein belongs to the ABC1 family. UbiB subfamily.

It localises to the cell inner membrane. Its pathway is cofactor biosynthesis; ubiquinone biosynthesis [regulation]. In terms of biological role, is probably a protein kinase regulator of UbiI activity which is involved in aerobic coenzyme Q (ubiquinone) biosynthesis. The sequence is that of Probable protein kinase UbiB from Shewanella pealeana (strain ATCC 700345 / ANG-SQ1).